The following is a 343-amino-acid chain: Phosphoribosylformylglycinamidine cyclo-ligase (343 aa).

Belongs to the AIR synthase family.

The protein localises to the cytoplasm. It carries out the reaction 2-formamido-N(1)-(5-O-phospho-beta-D-ribosyl)acetamidine + ATP = 5-amino-1-(5-phospho-beta-D-ribosyl)imidazole + ADP + phosphate + H(+). It participates in purine metabolism; IMP biosynthesis via de novo pathway; 5-amino-1-(5-phospho-D-ribosyl)imidazole from N(2)-formyl-N(1)-(5-phospho-D-ribosyl)glycinamide: step 2/2. In Rippkaea orientalis (strain PCC 8801 / RF-1) (Cyanothece sp. (strain PCC 8801)), this protein is Phosphoribosylformylglycinamidine cyclo-ligase.